The chain runs to 806 residues: MLFNGTTKYRDYAIVISLFFLLNVYLLYNTAQHTQVGNSKHISSDSGEKTSNPLPSCEITDDLAKSAISRAITPSCKAKLQLEACQLKNGTFTINFPENQCPNHDSRLIDQRIGCFLDKKEARVLTEFEYKLPKSNGKATCRKHCYKAGFLYFGLEFGHECFCGNDVSNATAVDDVECRAYKCPGNENSEEFCGGFNAVEIFRTGFRSKVNHRKPTYLPPSSDSIKNPVKILFLLQLNGRNERQVKRFLKSIYLPHHYYYIHVDARQNYMFSEMQKVADFLDNIHITERRFSTIWGGASLLQMFLQVIRDSMKIEKFKDWDYIINFSESDFPILPISDFERLITVNNGKSFLASHGYNTGKFIQKQGFEYVFSECDNRMFRIGKREFPQNLRIDGGSDWVGIHRNLAEFSISDEELPRKLRKTYESILLPLESFYHTLAFNSEFCDDLLMSNLRLTNWYRKQGCRCASLKPIVDWCGCSPLVFREETMKKFELQKAISKPTYFARKFDSMVDIDSIEAAEMQSISPEKLQLNHPTYHFAFANIFKTGIDEQKLHFESLANFALKSTETRAKFRKVLRIDALRAHHNALIEIVMKIETTDGATFEFLIHRLSHVNLTENEEKLVEHGYLLRAVSFGTKFEWKEELCREYMGFVTDNDTLHTRLQWHPTEHVKKVGDKTSPEMIFKYRKGDELIEQTVVKPYDSVFGGQFDSWNVGKKLSNLTTCSNFFVDIISPSSPDDAPPLATLHFPVYTDQNAHCHVDYLRQFFKIADFCTSGDACKEKIWSTSYPDPKSDIFVGYDEDTQTLI.

Over 1 to 11 (MLFNGTTKYRD) the chain is Cytoplasmic. Residues 12–32 (YAIVISLFFLLNVYLLYNTAQ) traverse the membrane as a helical; Signal-anchor for type II membrane protein segment. Residues 33–806 (HTQVGNSKHI…GYDEDTQTLI (774 aa)) lie on the Lumenal side of the membrane. Cys-57 and Cys-85 are oxidised to a cystine. N-linked (GlcNAc...) asparagine glycosylation is found at Asn-89 and Asn-169. Cystine bridges form between Cys-101-Cys-445, Cys-464-Cys-478, and Cys-466-Cys-476. A WSC domain is found at 109 to 205 (IDQRIGCFLD…FNAVEIFRTG (97 aa)). Residues Asp-264 and 293–295 (TIW) each bind UDP-alpha-D-xylose. Asn-325 is a glycosylation site (N-linked (GlcNAc...) asparagine). 398 to 399 (DW) is a binding site for UDP-alpha-D-xylose. UDP-alpha-D-xylose contacts are provided by residues Ser-479 and 505–506 (RK). N-linked (GlcNAc...) asparagine glycosylation is found at Asn-614, Asn-655, and Asn-719. An intrachain disulfide couples Cys-772 to Cys-778.

Belongs to the glycosyltransferase 14 family. XylT subfamily. A divalent metal cation serves as cofactor.

It is found in the endoplasmic reticulum membrane. The protein resides in the golgi apparatus membrane. It carries out the reaction UDP-alpha-D-xylose + L-seryl-[protein] = 3-O-(beta-D-xylosyl)-L-seryl-[protein] + UDP + H(+). It functions in the pathway glycan metabolism; chondroitin sulfate biosynthesis. Its pathway is glycan metabolism; heparan sulfate biosynthesis. In terms of biological role, catalyzes the first step in biosynthesis of glycosaminoglycan. Transfers D-xylose from UDP-D-xylose to specific serine residues of the core protein. Required for vulval morphogenesis and zygotic cytokinesis, suggesting that glycosaminoglycans play a central role in vulval morphogenesis. This chain is Xylosyltransferase sqv-6, found in Caenorhabditis elegans.